Reading from the N-terminus, the 63-residue chain is Large ribosomal subunit protein uL29 (63 aa).

It belongs to the universal ribosomal protein uL29 family.

The chain is Large ribosomal subunit protein uL29 from Shewanella oneidensis (strain ATCC 700550 / JCM 31522 / CIP 106686 / LMG 19005 / NCIMB 14063 / MR-1).